A 310-amino-acid chain; its full sequence is Formyltetrahydrofolate deformylase (310 aa).

Residues 1–30 (MGKGSMTAHATPNEPDYPPPPGGPPPPADI) form a disordered region. The span at 15–28 (PDYPPPPGGPPPPA) shows a compositional bias: pro residues. Residues 32–108 (RLLLRCHDRP…VADKFGIDYR (77 aa)) enclose the ACT domain. Residue Asp-255 is part of the active site.

The protein belongs to the PurU family.

The catalysed reaction is (6R)-10-formyltetrahydrofolate + H2O = (6S)-5,6,7,8-tetrahydrofolate + formate + H(+). It participates in purine metabolism; IMP biosynthesis via de novo pathway; formate from 10-formyl-5,6,7,8-tetrahydrofolate: step 1/1. Catalyzes the hydrolysis of 10-formyltetrahydrofolate (formyl-FH4) to formate and tetrahydrofolate (FH4). In Mycobacterium bovis (strain ATCC BAA-935 / AF2122/97), this protein is Formyltetrahydrofolate deformylase.